Reading from the N-terminus, the 273-residue chain is Dermonecrotic toxin LdSicTox-alphaIB3aiii (273 aa).

H5 is an active-site residue. Mg(2+) is bound by residues E25 and D27. The active-site Nucleophile is the H41. Intrachain disulfides connect C45-C51 and C47-C190. D85 is a binding site for Mg(2+).

It belongs to the arthropod phospholipase D family. Class II subfamily. Mg(2+) is required as a cofactor. As to expression, expressed by the venom gland.

The protein localises to the secreted. It carries out the reaction an N-(acyl)-sphingosylphosphocholine = an N-(acyl)-sphingosyl-1,3-cyclic phosphate + choline. The enzyme catalyses an N-(acyl)-sphingosylphosphoethanolamine = an N-(acyl)-sphingosyl-1,3-cyclic phosphate + ethanolamine. The catalysed reaction is a 1-acyl-sn-glycero-3-phosphocholine = a 1-acyl-sn-glycero-2,3-cyclic phosphate + choline. It catalyses the reaction a 1-acyl-sn-glycero-3-phosphoethanolamine = a 1-acyl-sn-glycero-2,3-cyclic phosphate + ethanolamine. In terms of biological role, dermonecrotic toxins cleave the phosphodiester linkage between the phosphate and headgroup of certain phospholipids (sphingolipid and lysolipid substrates), forming an alcohol (often choline) and a cyclic phosphate. This toxin acts on sphingomyelin (SM). It may also act on ceramide phosphoethanolamine (CPE), lysophosphatidylcholine (LPC) and lysophosphatidylethanolamine (LPE), but not on lysophosphatidylserine (LPS), and lysophosphatidylglycerol (LPG). It acts by transphosphatidylation, releasing exclusively cyclic phosphate products as second products. Induces dermonecrosis, hemolysis, increased vascular permeability, edema, inflammatory response, and platelet aggregation. In Loxosceles deserta (Desert recluse spider), this protein is Dermonecrotic toxin LdSicTox-alphaIB3aiii.